Here is a 396-residue protein sequence, read N- to C-terminus: Putative cytochrome P450 YjiB (396 aa).

C349 lines the heme pocket.

This sequence belongs to the cytochrome P450 family. It depends on heme as a cofactor.

The sequence is that of Putative cytochrome P450 YjiB (yjiB) from Bacillus subtilis (strain 168).